Consider the following 330-residue polypeptide: Fructose-1,6-bisphosphatase class 1 (330 aa).

Mg(2+) is bound by residues E84, D103, L105, and D106. Residues 106–109 (DGSS), N196, and K262 each bind substrate. Residue E268 coordinates Mg(2+).

It belongs to the FBPase class 1 family. Homotetramer. The cofactor is Mg(2+).

Its subcellular location is the cytoplasm. It carries out the reaction beta-D-fructose 1,6-bisphosphate + H2O = beta-D-fructose 6-phosphate + phosphate. It participates in carbohydrate biosynthesis; gluconeogenesis. The sequence is that of Fructose-1,6-bisphosphatase class 1 from Shewanella sp. (strain MR-7).